Reading from the N-terminus, the 264-residue chain is Hydroxyethylthiazole kinase (264 aa).

A substrate-binding site is contributed by methionine 52. Arginine 127 and threonine 173 together coordinate ATP. Glycine 200 lines the substrate pocket.

Belongs to the Thz kinase family. Mg(2+) serves as cofactor.

It carries out the reaction 5-(2-hydroxyethyl)-4-methylthiazole + ATP = 4-methyl-5-(2-phosphooxyethyl)-thiazole + ADP + H(+). The protein operates within cofactor biosynthesis; thiamine diphosphate biosynthesis; 4-methyl-5-(2-phosphoethyl)-thiazole from 5-(2-hydroxyethyl)-4-methylthiazole: step 1/1. In terms of biological role, catalyzes the phosphorylation of the hydroxyl group of 4-methyl-5-beta-hydroxyethylthiazole (THZ). The chain is Hydroxyethylthiazole kinase from Pectobacterium carotovorum subsp. carotovorum (strain PC1).